The following is a 148-amino-acid chain: Lysozyme C (148 aa).

The signal sequence occupies residues 1-18; that stretch reads MKALIILGLVLLSVMVQA. The C-type lysozyme domain occupies 19–148; it reads KVFERCELAR…LRQYIQGCGV (130 aa). 4 disulfides stabilise this stretch: Cys24–Cys146, Cys48–Cys134, Cys83–Cys99, and Cys95–Cys113. Residues Glu53 and Asp71 contribute to the active site.

Belongs to the glycosyl hydrolase 22 family. Monomer.

It is found in the secreted. It carries out the reaction Hydrolysis of (1-&gt;4)-beta-linkages between N-acetylmuramic acid and N-acetyl-D-glucosamine residues in a peptidoglycan and between N-acetyl-D-glucosamine residues in chitodextrins.. In terms of biological role, lysozymes have primarily a bacteriolytic function; those in tissues and body fluids are associated with the monocyte-macrophage system and enhance the activity of immunoagents. This Hylobates lar (Lar gibbon) protein is Lysozyme C (LYZ).